A 923-amino-acid polypeptide reads, in one-letter code: Progesterone receptor (923 aa).

The segment covering 1–11 (MTELQAKDPRT) has biased composition (basic and acidic residues). A disordered region spans residues 1–49 (MTELQAKDPRTLHTSGAAPSPTHVGSPLLARLDPDPFQGSQHSDASSVV). The tract at residues 1–164 (MTELQAKDPR…PATKGLLSPL (164 aa)) is AF3; mediates transcriptional activation (in isoform B). The interval 1-556 (MTELQAKDPR…YGFDSLPQKI (556 aa)) is modulating, Pro-Rich. Residue Lys-7 forms a Glycyl lysine isopeptide (Lys-Gly) (interchain with G-Cter in SUMO) linkage. Phosphoserine is present on Ser-20. The segment covering 38-49 (QGSQHSDASSVV) has biased composition (polar residues). The LXXL motif 1 signature appears at 56-60 (LDRLL). Residues 67 to 111 (AQELPDEKTQNQQSLSDVEGAFSGVEASRRRSRNPRAPEKDSRLL) form a disordered region. At Ser-82 the chain carries Phosphoserine. The short motif at 115-119 (LDTLL) is the LXXL motif 2 element. A phosphoserine mark is found at Ser-130 and Ser-162. Positions 152–239 (RSVPATKGLL…EGSAGPLLKS (88 aa)) are disordered. The mediates transcriptional transrepression (in isoform A) stretch occupies residues 165-304 (MSRPESKAGD…LATTVVDFIH (140 aa)). Positions 184–188 (VLPKA) match the Nuclear localization signal motif. Phosphoserine is present on residues Ser-190 and Ser-213. Phosphoserine; by MAPK1 is present on Ser-293. A disordered region spans residues 333 to 371 (AAQVPFAPPRGSPSAPSPPVPCGDFPDCTYPPEGDPKED). Residues 338–353 (FAPPRGSPSAPSPPVP) are compositionally biased toward pro residues. The residue at position 344 (Ser-344) is a Phosphoserine; by MAPK. A Glycyl lysine isopeptide (Lys-Gly) (interchain with G-Cter in SUMO); alternate cross-link involves residue Lys-387. Residue Lys-387 forms a Glycyl lysine isopeptide (Lys-Gly) (interchain with G-Cter in ubiquitin); alternate linkage. Ser-399 carries the post-translational modification Phosphoserine; by CDK2. The tract at residues 412–435 (TFPDFPLPPRPPRAPPSRPGEAAV) is disordered. Residues 416–429 (FPLPPRPPRAPPSR) show a composition bias toward pro residues. The segment at 450 to 536 (SALECILYKA…VYPPYLNYLR (87 aa)) is AF1; mediates transcriptional activation. Lys-521 participates in a covalent cross-link: Glycyl lysine isopeptide (Lys-Gly) (interchain with G-Cter in SUMO). NR C4-type zinc fingers lie at residues 557–577 (CLIC…CGSC) and 593–617 (CAGR…LRKC). Positions 557–629 (CLICGDEASG…AGMVLGGRKF (73 aa)) form a DNA-binding region, nuclear receptor. The residue at position 666 (Ser-666) is a Phosphoserine. The NR LBD domain occupies 669 to 903 (QEIQLVPPLI…EFPEMMSEVI (235 aa)). Positions 677–923 (LINLLMSIEP…MVKPLLFHKK (247 aa)) are AF2; mediates transcriptional activation. Arg-756 contacts progesterone.

Belongs to the nuclear hormone receptor family. NR3 subfamily. In terms of assembly, interacts with SMARD1 and UNC45A. Interacts with CUEDC2; the interaction promotes ubiquitination, decreases sumoylation, and represses transcriptional activity. Interacts with PIAS3; the interaction promotes sumoylation of PR in a hormone-dependent manner, inhibits DNA-binding, and alters nuclear export. Interacts with SP1; the interaction requires ligand-induced phosphorylation on Ser-344. Interacts with PRMT2. Isoform A interacts with NCOR2. Isoform B (but not isoform A) interacts with NCOA2 and NCOA1. Isoform B (but not isoform A) interacts with KLF9. Interacts with GTF2B. Phosphorylated on multiple serine sites. Several of these sites are hormone-dependent. Phosphorylation on Ser-293 is highly hormone-dependent and modulates ubiquitination and sumoylation on Lys-387. Phosphorylation on Ser-344 also requires induction by hormone. Basal phosphorylation on Ser-82, Ser-190 and Ser-399 is increased in response to progesterone and can be phosphorylated in vitro by the CDK2-A1 complex. Increased levels of phosphorylation on Ser-399 also in the presence of EGF, heregulin, IGF, PMA and FBS. Phosphorylation at this site by CDK2 is ligand-independent, and increases nuclear translocation and transcriptional activity. Phosphorylation at Ser-293, but not at Ser-190, is impaired during the G(2)/M phase of the cell cycle. Phosphorylation on Ser-344 by ERK1/2 MAPK is required for interaction with SP1. In terms of processing, sumoylation is hormone-dependent and represses transcriptional activity. Sumoylation on all three sites is enhanced by PIAS3. Desumoylated by SENP1. Sumoylation on Lys-387, the main site of sumoylation, is repressed by ubiquitination on the same site, and modulated by phosphorylation at Ser-293. Post-translationally, ubiquitination is hormone-dependent and represses sumoylation on the same site. Promoted by MAPK-mediated phosphorylation on Ser-293. Ubiquitinated by UBR5, leading to its degradation: UBR5 specifically recognizes and binds ligand-bound PGR when it is not associated with coactivators (NCOAs). In presence of NCOAs, the UBR5-degron is not accessible, preventing its ubiquitination and degradation. Palmitoylated by ZDHHC7 and ZDHHC21. Palmitoylation is required for plasma membrane targeting and for rapid intracellular signaling via ERK and AKT kinases and cAMP generation. As to expression, isoform A and isoform B are expressed in the pituitary.

Its subcellular location is the nucleus. It localises to the cytoplasm. Its function is as follows. The steroid hormones and their receptors are involved in the regulation of eukaryotic gene expression and affect cellular proliferation and differentiation in target tissues. Depending on the isoform, progesterone receptor functions as a transcriptional activator or repressor. In terms of biological role, ligand-dependent transdominant repressor of steroid hormone receptor transcriptional activity including repression of its isoform B, MR and ER. Transrepressional activity may involve recruitment of corepressor NCOR2. Functionally, transcriptional activator of several progesteron-dependent promoters in a variety of cell types. Involved in activation of SRC-dependent MAPK signaling on hormone stimulation. The polypeptide is Progesterone receptor (Pgr) (Rattus norvegicus (Rat)).